The following is a 98-amino-acid chain: NADH-ubiquinone oxidoreductase chain 4L (98 aa).

3 consecutive transmembrane segments (helical) span residues 1-21 (MTMV…GLLM), 29-49 (SLLC…ITIL), and 61-81 (IILL…LVMV).

The protein belongs to the complex I subunit 4L family. In terms of assembly, core subunit of respiratory chain NADH dehydrogenase (Complex I) which is composed of 45 different subunits.

The protein resides in the mitochondrion inner membrane. The enzyme catalyses a ubiquinone + NADH + 5 H(+)(in) = a ubiquinol + NAD(+) + 4 H(+)(out). Its function is as follows. Core subunit of the mitochondrial membrane respiratory chain NADH dehydrogenase (Complex I) which catalyzes electron transfer from NADH through the respiratory chain, using ubiquinone as an electron acceptor. Part of the enzyme membrane arm which is embedded in the lipid bilayer and involved in proton translocation. This is NADH-ubiquinone oxidoreductase chain 4L (MT-ND4L) from Ommatophoca rossii (Ross seal).